The chain runs to 249 residues: Pyridoxamine 5'-phosphate oxidase family protein ustO (249 aa).

21–24 lines the substrate pocket; sequence LFFV. FMN is bound by residues 76-81, 91-92, arginine 105, and 163-164; these read ATVMFC and RL. 215–217 is a substrate binding site; sequence ASY. The helical transmembrane segment at 227 to 247 threads the bilayer; sequence TGMALMFLVMVVAQWVGYVLY.

It belongs to the pyridoxamine 5'-phosphate oxidase family. FMN serves as cofactor.

It localises to the membrane. The protein operates within mycotoxin biosynthesis. Its function is as follows. Pyridoxamine 5'-phosphate oxidase family protein; part of the gene cluster that mediates the biosynthesis of the secondary metabolite ustiloxin B, an antimitotic tetrapeptide. First, ustA is processed by the subtilisin-like endoprotease Kex2 that is outside the ustiloxin B gene cluster, at the C-terminal side of Arg-Lys, after transfer to Golgi apparatus through the endoplasmic reticulum (ER). Cleavage by KEX2 generates 16 peptides YAIG-I to YAIG-XVI. To process the precursor peptide further, at least two peptidases are necessary to cleave the N-terminal and C-terminal sides of the Tyr-Ala-Ile-Gly core peptide which serves as backbone for the synthesis of ustiloxin B, through cyclization and modification of the tyrosine with a non-protein coding amino acid, norvaline. One of the two peptidases must be the serine peptidase ustP; and the other pepdidase is probably ustH. Macrocyclization of the core peptide derived from ustA requires the tyrosinase ustQ, as well as the homologous oxidases ustYa and ustYb, and leads to the production of the first cyclization product N-desmethylustiloxin F. For the formation of N-desmethylustiloxin F, three oxidation steps are required, hydroxylation at the benzylic position, hydroxylation at either the aromatic ring of Tyr or beta-position of Ile, and oxidative cyclization. UstQ may catalyze the oxidation of a phenol moiety, whereas the ustYa and ustYb are most likely responsible for the remaining two-step oxidations. N-desmethylustiloxin F is then methylated by ustM to yield ustiloxin F which in turn substrate of the cytochrome P450 monooxygenase ustC which catalyzes the formation of S-deoxyustiloxin H. The flavoprotein monooxygenases ustF1 and ustF2 then participate in the modification of the side chain of S-deoxyustiloxin H, leading to the synthesis of an oxime intermediate, via ustiloxin H. Finally, carboxylative dehydration performed by the cysteine desulfurase-like protein ustD yields ustiloxin B. This Aspergillus flavus (strain ATCC 200026 / FGSC A1120 / IAM 13836 / NRRL 3357 / JCM 12722 / SRRC 167) protein is Pyridoxamine 5'-phosphate oxidase family protein ustO.